The following is a 978-amino-acid chain: Sensor histidine kinase TodS (978 aa).

Positions 32–103 (CEEHARIIFD…TQKRLVETAS (72 aa)) constitute a PAS 1 domain. One can recognise a PAC 1 domain in the interval 108–162 (VRCDVEILGKSGGREVIAVDFSLLPICNEEGSIVYLLAEGRNITDKKKAEAMLAL). The Histidine kinase 1 domain occupies 187 to 405 (KVSHELRTPL…LFQVKLPLNA (219 aa)). His-190 is modified (phosphohistidine; by autocatalysis). The 116-residue stretch at 452 to 567 (RVLIVEDNPD…ELRARVSNLV (116 aa)) folds into the Response regulatory domain. Residue Asp-500 is modified to 4-aspartylphosphate. Residues 611–681 (SEARWKAVYE…QRLANLLQGG (71 aa)) enclose the PAS 2 domain. One can recognise a PAC 2 domain in the interval 685–737 (YSVERSYLCKNGSTIWANASVSLMPQRVGESPVILQIIDDITEKKQAQENLNQ). The region spanning 757-974 (YIAHEINQPL…CFLVSIPARQ (218 aa)) is the Histidine kinase 2 domain. Phosphohistidine is present on His-760.

Homodimer. Binds as a dimer to a pseudopalindromic sequence. Autophosphorylated. Activation requires a sequential transfer of a phosphate group from a His in the primary transmitter domain, to an Asp in the receiver domain and to a His in the secondary transmitter domain.

The protein resides in the cytoplasm. The enzyme catalyses ATP + protein L-histidine = ADP + protein N-phospho-L-histidine.. Functionally, member of the two-component regulatory system TodS/TodT involved in the regulation of toluene degradation. Phosphorylates TodT via a four-step phosphorelay in response to toluene. In Pseudomonas putida (strain ATCC 700007 / DSM 6899 / JCM 31910 / BCRC 17059 / LMG 24140 / F1), this protein is Sensor histidine kinase TodS (todS).